The chain runs to 58 residues: Small ribosomal subunit protein bS21 (58 aa).

The disordered stretch occupies residues 31-58 (DLKRIRHHETPVEKYKRKAQQRRRSRRR). The segment covering 45–58 (YKRKAQQRRRSRRR) has biased composition (basic residues).

This sequence belongs to the bacterial ribosomal protein bS21 family.

The chain is Small ribosomal subunit protein bS21 from Prochlorococcus marinus (strain MIT 9303).